The following is a 616-amino-acid chain: Chaperone protein DnaK (616 aa).

T174 carries the post-translational modification Phosphothreonine; by autocatalysis. Residues 576–616 form a disordered region; sequence QASAPGAGPEGASGGFGGENKKDDNVVDADYTVIDDDKKKT. Gly residues predominate over residues 583–593; sequence GPEGASGGFGG.

Belongs to the heat shock protein 70 family.

Functionally, acts as a chaperone. In Heliobacterium modesticaldum (strain ATCC 51547 / Ice1), this protein is Chaperone protein DnaK.